A 358-amino-acid polypeptide reads, in one-letter code: Cytochrome c peroxidase, mitochondrial (358 aa).

The N-terminal 38 residues, 1 to 38, are a transit peptide targeting the mitochondrion; the sequence is MAASRTATRTLRALRTSTRPALTAAPRAAFRQGGRRLY. Catalysis depends on His119, which acts as the Proton acceptor. The disordered stretch occupies residues 192–214; that stretch reads PYRPGRQDRDAAGCTPDGRLPDA. Heme b is bound at residue His242. Residue Trp258 is the Tryptophan radical intermediate of the active site.

The protein belongs to the peroxidase family. Cytochrome c peroxidase subfamily. In terms of assembly, forms a one-to-one complex with cytochrome c. Heme b serves as cofactor.

It localises to the mitochondrion matrix. The protein resides in the mitochondrion intermembrane space. The catalysed reaction is 2 Fe(II)-[cytochrome c] + H2O2 + 2 H(+) = 2 Fe(III)-[cytochrome c] + 2 H2O. Its function is as follows. Destroys radicals which are normally produced within the cells and which are toxic to biological systems. The sequence is that of Cytochrome c peroxidase, mitochondrial (ccp-1) from Neurospora crassa (strain ATCC 24698 / 74-OR23-1A / CBS 708.71 / DSM 1257 / FGSC 987).